Here is a 129-residue protein sequence, read N- to C-terminus: Small ribosomal subunit protein uS11 (129 aa).

It belongs to the universal ribosomal protein uS11 family. As to quaternary structure, part of the 30S ribosomal subunit. Interacts with proteins S7 and S18. Binds to IF-3.

In terms of biological role, located on the platform of the 30S subunit, it bridges several disparate RNA helices of the 16S rRNA. Forms part of the Shine-Dalgarno cleft in the 70S ribosome. The protein is Small ribosomal subunit protein uS11 of Francisella tularensis subsp. mediasiatica (strain FSC147).